The following is a 331-amino-acid chain: Phosphate acyltransferase (331 aa).

This sequence belongs to the PlsX family. As to quaternary structure, homodimer. Probably interacts with PlsY.

It localises to the cytoplasm. It catalyses the reaction a fatty acyl-[ACP] + phosphate = an acyl phosphate + holo-[ACP]. It participates in lipid metabolism; phospholipid metabolism. Its function is as follows. Catalyzes the reversible formation of acyl-phosphate (acyl-PO(4)) from acyl-[acyl-carrier-protein] (acyl-ACP). This enzyme utilizes acyl-ACP as fatty acyl donor, but not acyl-CoA. The sequence is that of Phosphate acyltransferase from Ureaplasma urealyticum serovar 10 (strain ATCC 33699 / Western).